Reading from the N-terminus, the 666-residue chain is Fructose-1,6-bisphosphatase class 3 (666 aa).

Belongs to the FBPase class 3 family. Mn(2+) is required as a cofactor.

It carries out the reaction beta-D-fructose 1,6-bisphosphate + H2O = beta-D-fructose 6-phosphate + phosphate. The protein operates within carbohydrate biosynthesis; gluconeogenesis. The protein is Fructose-1,6-bisphosphatase class 3 of Phocaeicola vulgatus (strain ATCC 8482 / DSM 1447 / JCM 5826 / CCUG 4940 / NBRC 14291 / NCTC 11154) (Bacteroides vulgatus).